The primary structure comprises 165 residues: Large ribosomal subunit protein uL5 (165 aa).

Belongs to the universal ribosomal protein uL5 family. As to quaternary structure, part of the 50S ribosomal subunit; contacts the 5S rRNA and probably tRNA. Forms a bridge to the 30S subunit in the 70S ribosome.

Its function is as follows. This is one of the proteins that bind and probably mediate the attachment of the 5S RNA into the large ribosomal subunit, where it forms part of the central protuberance. In the 70S ribosome it contacts protein S13 of the 30S subunit (bridge B1b), connecting the 2 subunits; this bridge is implicated in subunit movement. May contact the P site tRNA; the 5S rRNA and some of its associated proteins might help stabilize positioning of ribosome-bound tRNAs. The protein is Large ribosomal subunit protein uL5 of Methanosarcina acetivorans (strain ATCC 35395 / DSM 2834 / JCM 12185 / C2A).